We begin with the raw amino-acid sequence, 336 residues long: Holliday junction branch migration complex subunit RuvB (336 aa).

Residues 4–184 (ADRIISAIAK…FGIVQRLEFY (181 aa)) are large ATPase domain (RuvB-L). ATP-binding positions include Ile-23, Arg-24, Gly-65, Lys-68, Thr-69, Thr-70, 131 to 133 (EDY), Arg-174, Tyr-184, and Arg-221. Thr-69 serves as a coordination point for Mg(2+). The tract at residues 185–255 (SIEDLTSIVM…IAKAALAMLD (71 aa)) is small ATPAse domain (RuvB-S). Residues 258-336 (QAGFDYLDRK…HFGLAKLADK (79 aa)) form a head domain (RuvB-H) region. The DNA site is built by Arg-294, Arg-313, and Arg-318.

The protein belongs to the RuvB family. Homohexamer. Forms an RuvA(8)-RuvB(12)-Holliday junction (HJ) complex. HJ DNA is sandwiched between 2 RuvA tetramers; dsDNA enters through RuvA and exits via RuvB. An RuvB hexamer assembles on each DNA strand where it exits the tetramer. Each RuvB hexamer is contacted by two RuvA subunits (via domain III) on 2 adjacent RuvB subunits; this complex drives branch migration. In the full resolvosome a probable DNA-RuvA(4)-RuvB(12)-RuvC(2) complex forms which resolves the HJ.

It is found in the cytoplasm. The catalysed reaction is ATP + H2O = ADP + phosphate + H(+). Functionally, the RuvA-RuvB-RuvC complex processes Holliday junction (HJ) DNA during genetic recombination and DNA repair, while the RuvA-RuvB complex plays an important role in the rescue of blocked DNA replication forks via replication fork reversal (RFR). RuvA specifically binds to HJ cruciform DNA, conferring on it an open structure. The RuvB hexamer acts as an ATP-dependent pump, pulling dsDNA into and through the RuvAB complex. RuvB forms 2 homohexamers on either side of HJ DNA bound by 1 or 2 RuvA tetramers; 4 subunits per hexamer contact DNA at a time. Coordinated motions by a converter formed by DNA-disengaged RuvB subunits stimulates ATP hydrolysis and nucleotide exchange. Immobilization of the converter enables RuvB to convert the ATP-contained energy into a lever motion, pulling 2 nucleotides of DNA out of the RuvA tetramer per ATP hydrolyzed, thus driving DNA branch migration. The RuvB motors rotate together with the DNA substrate, which together with the progressing nucleotide cycle form the mechanistic basis for DNA recombination by continuous HJ branch migration. Branch migration allows RuvC to scan DNA until it finds its consensus sequence, where it cleaves and resolves cruciform DNA. In Actinobacillus succinogenes (strain ATCC 55618 / DSM 22257 / CCUG 43843 / 130Z), this protein is Holliday junction branch migration complex subunit RuvB.